We begin with the raw amino-acid sequence, 105 residues long: MDATKIKFDVILLSFLLIISGIPSNLGLSTSVRGTTRSEPEAFHGGKFPAMKMRKLMAPNMEVDYSSDYYDGGSSSSTTSPSPPVPDYDDIYRRQGDVPSPGIGH.

Positions 1–29 (MDATKIKFDVILLSFLLIISGIPSNLGLS) are cleaved as a signal peptide. Positions 30–90 (TSVRGTTRSE…PSPPVPDYDD (61 aa)) are excised as a propeptide. Low complexity predominate over residues 68 to 80 (DYYDGGSSSSTTS). The disordered stretch occupies residues 68 to 105 (DYYDGGSSSSTTSPSPPVPDYDDIYRRQGDVPSPGIGH). Hydroxyproline occurs at positions 99 and 101.

The protein belongs to the C-terminally encoded plant signaling peptide (CEP) family. As to quaternary structure, interacts with CEP receptors (e.g. CEPR1 and CEPR2). Post-translationally, the mature small signaling peptide is generated by proteolytic processing of the longer precursor.

It localises to the secreted. Its subcellular location is the extracellular space. It is found in the apoplast. Extracellular signaling peptide that may regulate primary root growth rate and systemic nitrogen (N)-demand signaling. This chain is Precursor of CEP15, found in Arabidopsis thaliana (Mouse-ear cress).